Here is a 419-residue protein sequence, read N- to C-terminus: UDP-N-acetylglucosamine 1-carboxyvinyltransferase (419 aa).

22-23 (KN) contributes to the phosphoenolpyruvate binding site. Arginine 93 provides a ligand contact to UDP-N-acetyl-alpha-D-glucosamine. The active-site Proton donor is cysteine 117. Cysteine 117 is subject to 2-(S-cysteinyl)pyruvic acid O-phosphothioketal. The UDP-N-acetyl-alpha-D-glucosamine site is built by aspartate 307 and isoleucine 329.

The protein belongs to the EPSP synthase family. MurA subfamily.

Its subcellular location is the cytoplasm. It catalyses the reaction phosphoenolpyruvate + UDP-N-acetyl-alpha-D-glucosamine = UDP-N-acetyl-3-O-(1-carboxyvinyl)-alpha-D-glucosamine + phosphate. The protein operates within cell wall biogenesis; peptidoglycan biosynthesis. Its function is as follows. Cell wall formation. Adds enolpyruvyl to UDP-N-acetylglucosamine. The chain is UDP-N-acetylglucosamine 1-carboxyvinyltransferase from Shewanella sediminis (strain HAW-EB3).